The following is a 196-amino-acid chain: Segregation and condensation protein B (196 aa).

Belongs to the ScpB family. In terms of assembly, homodimer. Homodimerization may be required to stabilize the binding of ScpA to the Smc head domains. Component of a cohesin-like complex composed of ScpA, ScpB and the Smc homodimer, in which ScpA and ScpB bind to the head domain of Smc. The presence of the three proteins is required for the association of the complex with DNA.

It is found in the cytoplasm. Functionally, participates in chromosomal partition during cell division. May act via the formation of a condensin-like complex containing Smc and ScpA that pull DNA away from mid-cell into both cell halves. This is Segregation and condensation protein B from Lactobacillus johnsonii (strain CNCM I-12250 / La1 / NCC 533).